Reading from the N-terminus, the 114-residue chain is uncharacterized protein (114 aa).

Residues 13 to 30 form a helical membrane-spanning segment; the sequence is LYISAAGIASIYVVKTIV.

It localises to the mitochondrion outer membrane. This is an uncharacterized protein from Saccharomyces cerevisiae (strain ATCC 204508 / S288c) (Baker's yeast).